We begin with the raw amino-acid sequence, 389 residues long: Alanine racemase (389 aa).

Lys-46 serves as the catalytic Proton acceptor; specific for D-alanine. Lys-46 carries the post-translational modification N6-(pyridoxal phosphate)lysine. Position 144 (Arg-144) interacts with substrate. The Proton acceptor; specific for L-alanine role is filled by Tyr-275. Substrate is bound at residue Met-323.

It belongs to the alanine racemase family. The cofactor is pyridoxal 5'-phosphate.

It carries out the reaction L-alanine = D-alanine. It participates in amino-acid biosynthesis; D-alanine biosynthesis; D-alanine from L-alanine: step 1/1. Functionally, catalyzes the interconversion of L-alanine and D-alanine. May also act on other amino acids. The sequence is that of Alanine racemase (alr) from Mycolicibacterium smegmatis (strain ATCC 700084 / mc(2)155) (Mycobacterium smegmatis).